The primary structure comprises 259 residues: Ribosomal RNA small subunit methyltransferase A (259 aa).

Residues N13, L15, G39, E60, D84, and N101 each coordinate S-adenosyl-L-methionine.

This sequence belongs to the class I-like SAM-binding methyltransferase superfamily. rRNA adenine N(6)-methyltransferase family. RsmA subfamily.

It is found in the cytoplasm. It catalyses the reaction adenosine(1518)/adenosine(1519) in 16S rRNA + 4 S-adenosyl-L-methionine = N(6)-dimethyladenosine(1518)/N(6)-dimethyladenosine(1519) in 16S rRNA + 4 S-adenosyl-L-homocysteine + 4 H(+). In terms of biological role, specifically dimethylates two adjacent adenosines (A1518 and A1519) in the loop of a conserved hairpin near the 3'-end of 16S rRNA in the 30S particle. May play a critical role in biogenesis of 30S subunits. The sequence is that of Ribosomal RNA small subunit methyltransferase A from Mesomycoplasma hyopneumoniae (strain J / ATCC 25934 / NCTC 10110) (Mycoplasma hyopneumoniae).